A 159-amino-acid polypeptide reads, in one-letter code: MKKVIYPGTFDPITNGHLDIITRAANMFDQIIIGVAASPSKKTLFSLEERVKLVEESTAHLSNVSTAGFSGLLVDFAREQEANVLVRGLRTTVDFEYEFGLTSMYRKLLPGVESVFLTPAEEYAFLSSTIVREVAIHGGDVEQFVPKCVYTAIKTKVAK.

Thr-9 lines the substrate pocket. ATP is bound by residues 9 to 10 and His-17; that span reads TF. The substrate site is built by Lys-41, Leu-73, and Arg-87. Residues 88–90, Glu-98, and 123–129 contribute to the ATP site; these read GLR and YAFLSST.

It belongs to the bacterial CoaD family. In terms of assembly, homohexamer. It depends on Mg(2+) as a cofactor.

Its subcellular location is the cytoplasm. It catalyses the reaction (R)-4'-phosphopantetheine + ATP + H(+) = 3'-dephospho-CoA + diphosphate. Its pathway is cofactor biosynthesis; coenzyme A biosynthesis; CoA from (R)-pantothenate: step 4/5. Reversibly transfers an adenylyl group from ATP to 4'-phosphopantetheine, yielding dephospho-CoA (dPCoA) and pyrophosphate. In Vibrio campbellii (strain ATCC BAA-1116), this protein is Phosphopantetheine adenylyltransferase.